The sequence spans 215 residues: Peroxiredoxin-5, mitochondrial (215 aa).

The transit peptide at 1–53 (MGLAGVCVLRRSAGYILGGAARQSVAATAAARRRSEGGWASGGVRSFSRAAAA) directs the protein to the mitochondrion. Residues 57-215 (IKVGDAIPAV…SLAPSIISQL (159 aa)) enclose the Thioredoxin domain. Residue K76 is modified to N6-acetyllysine. The residue at position 84 (K84) is an N6-acetyllysine; alternate. An N6-succinyllysine; alternate modification is found at K84. C101 acts as the Cysteine sulfenic acid (-SOH) intermediate in catalysis. C101 is lipidated: S-palmitoyl cysteine. C101 and C205 are joined by a disulfide. An N6-succinyllysine modification is found at K117. S172 and S183 each carry phosphoserine. Positions 213–215 (SQL) match the Microbody targeting signal motif.

The protein belongs to the peroxiredoxin family. Prx5 subfamily. In terms of assembly, monomer. S-palmitoylated. Palmitoylation occurs on the active site, inhibiting its reactivity; therefore PRDX5 palmitoylation status determines its antioxidant capacity. Post-translationally, S-palmitoylated. Depalmitoylated by ABHD10.

It localises to the mitochondrion. Its subcellular location is the cytoplasm. The protein localises to the peroxisome matrix. It carries out the reaction a hydroperoxide + [thioredoxin]-dithiol = an alcohol + [thioredoxin]-disulfide + H2O. Functionally, thiol-specific peroxidase that catalyzes the reduction of hydrogen peroxide and organic hydroperoxides to water and alcohols, respectively. Plays a role in cell protection against oxidative stress by detoxifying peroxides and as sensor of hydrogen peroxide-mediated signaling events. The sequence is that of Peroxiredoxin-5, mitochondrial (PRDX5) from Chlorocebus aethiops (Green monkey).